We begin with the raw amino-acid sequence, 431 residues long: MNTLDWTQLTADARTQALTRPVQTVATQTREAVATLIADVRARGDVALREITARFDGVTLESFAVSDAEFAAADAAIAPELRQAMQDAVARIDTFHRAGMSEGYAVETAPGVVCEKIVRPIGRVGLYVPAGSAPLPSTALMLGVPARLAGCREVVLCTPPRKDGSVDPAVLVAAQLTGVRRVFKLGGAQAIAAMAYGTDSIPSCDKLFGPGNSFVTEAKQQVAQSGAAAIDMPAGPSEVLVIADAGAQPAFVAADLLSQAEHGPDSQVLLLSDSDALITAVQEQLDLQLAQLSRADIARQALAQSRLIKVATLQDAFEISNRYAPEHLILALREPRAWLAQVEAAGSVFLGDYTPEALGDYCSGTNHVLPTSGAARAYSGVSVASFQNMVSVQAASKAGIDGIGACAVILARAEGLDAHANAVALRMGVAA.

The NAD(+) site is built by Y127, Q189, and N212. Substrate contacts are provided by S237, Q259, and H262. Zn(2+)-binding residues include Q259 and H262. Active-site proton acceptor residues include E326 and H327. Substrate is bound by residues H327, D360, E414, and H419. Residue D360 coordinates Zn(2+). H419 lines the Zn(2+) pocket.

This sequence belongs to the histidinol dehydrogenase family. The cofactor is Zn(2+).

It carries out the reaction L-histidinol + 2 NAD(+) + H2O = L-histidine + 2 NADH + 3 H(+). The protein operates within amino-acid biosynthesis; L-histidine biosynthesis; L-histidine from 5-phospho-alpha-D-ribose 1-diphosphate: step 9/9. Functionally, catalyzes the sequential NAD-dependent oxidations of L-histidinol to L-histidinaldehyde and then to L-histidine. This is Histidinol dehydrogenase from Xanthomonas campestris pv. campestris (strain ATCC 33913 / DSM 3586 / NCPPB 528 / LMG 568 / P 25).